A 264-amino-acid chain; its full sequence is uncharacterized protein (264 aa).

A helical transmembrane segment spans residues 7–27 (LTLGICLVLLIILIVGYVIMT).

The protein belongs to the staphylococcal tandem lipoprotein family.

Its subcellular location is the cell membrane. This is an uncharacterized protein from Staphylococcus aureus (strain NCTC 8325 / PS 47).